The chain runs to 203 residues: Small ribosomal subunit protein uS2 (203 aa).

The protein belongs to the universal ribosomal protein uS2 family.

This is Small ribosomal subunit protein uS2 from Methanopyrus kandleri (strain AV19 / DSM 6324 / JCM 9639 / NBRC 100938).